The sequence spans 271 residues: Phosphate import ATP-binding protein PstB (271 aa).

Residues Val-13–Ile-266 form the ABC transporter domain. Position 57–64 (Gly-57–Ser-64) interacts with ATP.

Belongs to the ABC transporter superfamily. Phosphate importer (TC 3.A.1.7) family. As to quaternary structure, the complex is composed of two ATP-binding proteins (PstB), two transmembrane proteins (PstC and PstA) and a solute-binding protein (PstS).

The protein resides in the cell inner membrane. The catalysed reaction is phosphate(out) + ATP + H2O = ADP + 2 phosphate(in) + H(+). Part of the ABC transporter complex PstSACB involved in phosphate import. Responsible for energy coupling to the transport system. The chain is Phosphate import ATP-binding protein PstB from Thermus thermophilus (strain ATCC 27634 / DSM 579 / HB8).